The chain runs to 516 residues: MVTMDNSDKIYDLIGSANNNDVDSQNELVRVFVHNCFIRSVLTFAKPFKWNNIVENAIQDSNYTYFILCFHGHKYNRVKYQEIYKKIIDGLFLRISKSSSLDALTYNNLGFIYHNDIFKKNKVIKVISHYCKAVNMNSKHAQYNLATFIRLNYYKQEFVKLLSKTVFKDSTLPISKEIIFKKIYELYKLSASQFNPNAEHSLSTTCEFREFIGQKERDKWLKKSAKNGLSISQYSIGTKYLGGDVTNRKYQKGIIYLKNSAKQGDTGSQISLINIYSKEYGKNIMTNINEMMYWYLNCEQYTSFFMNIFDVFPIVCNTMEIDNKSNEENQNITNIETIILSKIQLLLVKIKYDCVCNNSITITNILDELENKFFKIIESRQKIQNSSSIFYISQMRLVDSVYQNIIDQQNKTGIIPFVKNYLVDEEIYMSIGFDSIEICDQLEILLNNDMYAENIVELLWRLDELCKEKSYYSKILKITNMLENYRSQVITFLEDNLTLRENYFFKKYKHIQRNYF.

Sel1-like repeat units lie at residues 103–138 (ALTY…NMNS) and 230–265 (SISQ…KQGD).

This Acanthamoeba polyphaga (Amoeba) protein is Putative sel1-like repeat-containing protein R850.